Consider the following 1210-residue polypeptide: ATP-dependent helicase/nuclease subunit A (1210 aa).

Positions 27 to 483 (QKRTAQQIEA…ILLKENFRSQ (457 aa)) constitute a UvrD-like helicase ATP-binding domain. 48–55 (ASAGSGKT) is an ATP binding site. A UvrD-like helicase C-terminal domain is found at 512–798 (QLIAGSHAQT…NLMTIHKSKG (287 aa)).

Belongs to the helicase family. AddA subfamily. In terms of assembly, heterodimer of AddA and AddB/RexB. Mg(2+) is required as a cofactor.

It catalyses the reaction Couples ATP hydrolysis with the unwinding of duplex DNA by translocating in the 3'-5' direction.. The enzyme catalyses ATP + H2O = ADP + phosphate + H(+). The heterodimer acts as both an ATP-dependent DNA helicase and an ATP-dependent, dual-direction single-stranded exonuclease. Recognizes the chi site generating a DNA molecule suitable for the initiation of homologous recombination. The AddA nuclease domain is required for chi fragment generation; this subunit has the helicase and 3' -&gt; 5' nuclease activities. This is ATP-dependent helicase/nuclease subunit A from Streptococcus pyogenes serotype M5 (strain Manfredo).